The sequence spans 262 residues: Pyridoxine 5'-phosphate synthase (262 aa).

N6 provides a ligand contact to 3-amino-2-oxopropyl phosphate. 8 to 9 is a 1-deoxy-D-xylulose 5-phosphate binding site; that stretch reads DH. R17 is a 3-amino-2-oxopropyl phosphate binding site. The Proton acceptor role is filled by H43. 1-deoxy-D-xylulose 5-phosphate is bound by residues R45 and H50. E70 acts as the Proton acceptor in catalysis. T102 provides a ligand contact to 1-deoxy-D-xylulose 5-phosphate. H215 functions as the Proton donor in the catalytic mechanism. 3-amino-2-oxopropyl phosphate contacts are provided by residues G216 and 237-238; that span reads GH.

The protein belongs to the PNP synthase family. In terms of assembly, homooctamer; tetramer of dimers.

It is found in the cytoplasm. The enzyme catalyses 3-amino-2-oxopropyl phosphate + 1-deoxy-D-xylulose 5-phosphate = pyridoxine 5'-phosphate + phosphate + 2 H2O + H(+). It functions in the pathway cofactor biosynthesis; pyridoxine 5'-phosphate biosynthesis; pyridoxine 5'-phosphate from D-erythrose 4-phosphate: step 5/5. Catalyzes the complicated ring closure reaction between the two acyclic compounds 1-deoxy-D-xylulose-5-phosphate (DXP) and 3-amino-2-oxopropyl phosphate (1-amino-acetone-3-phosphate or AAP) to form pyridoxine 5'-phosphate (PNP) and inorganic phosphate. The chain is Pyridoxine 5'-phosphate synthase from Helicobacter pylori (strain G27).